The sequence spans 180 residues: Large ribosomal subunit protein uL5 (180 aa).

It belongs to the universal ribosomal protein uL5 family. As to quaternary structure, part of the 50S ribosomal subunit; part of the 5S rRNA/L5/L18/L25 subcomplex. Contacts the 5S rRNA and the P site tRNA. Forms a bridge to the 30S subunit in the 70S ribosome.

This is one of the proteins that bind and probably mediate the attachment of the 5S RNA into the large ribosomal subunit, where it forms part of the central protuberance. In the 70S ribosome it contacts protein S13 of the 30S subunit (bridge B1b), connecting the 2 subunits; this bridge is implicated in subunit movement. Contacts the P site tRNA; the 5S rRNA and some of its associated proteins might help stabilize positioning of ribosome-bound tRNAs. This Streptococcus sanguinis (strain SK36) protein is Large ribosomal subunit protein uL5.